The primary structure comprises 64 residues: Large ribosomal subunit protein bL35 (64 aa).

Residues 1 to 26 (MPKMKSHRGASKRFKRTASGKLKRGR) show a composition bias toward basic residues. Disordered regions lie at residues 1 to 28 (MPKMKSHRGASKRFKRTASGKLKRGRAY) and 33 to 52 (FGNKSTKAKRKLRKASMVSS).

Belongs to the bacterial ribosomal protein bL35 family.

The sequence is that of Large ribosomal subunit protein bL35 from Exiguobacterium sibiricum (strain DSM 17290 / CCUG 55495 / CIP 109462 / JCM 13490 / 255-15).